The chain runs to 67 residues: MKTQFTVLLITLVLFQMLSQSEAILSYLWNGIKSIFGKRGLSDLSDLDELFDGEITKADLDLLREIM.

A signal peptide spans 1–23 (MKTQFTVLLITLVLFQMLSQSEA). A Phenylalanine amide modification is found at phenylalanine 36. The propeptide occupies 40–67 (GLSDLSDLDELFDGEITKADLDLLREIM).

Belongs to the non-disulfide-bridged peptide (NDBP) superfamily. Short antimicrobial peptide (group 4) family. Expressed by the venom gland.

The protein resides in the secreted. It localises to the target cell membrane. Functionally, amphipathic peptide with antibacterial activities. Shows antiviral activities against the herpes simplex virus type-1. It potently inhibits the initial infection by provoking the rupture of viral envelop and the dissociation of proteins from the virions (EC(50) is 0.41 uM). It also effectively inhibits viral attachment (EC(50) is 5.73 uM), viral entry (EC(50) is 4.32 uM) and viral proliferation after infection (EC(50) is 8.41 uM). Morever, it enters mammalian tested cells (Vero) and reduces the intracellular infectivity. The chain is Peptide Hp1239 from Heterometrus petersii (Asian forest scorpion).